A 409-amino-acid chain; its full sequence is MGGIKEFLKHEASGGILLMIATVAALLCQNTFLSDFYNEFLKTKFTVSFGEYGLSKPLILWVNDGLMAVFFFLIGLELKREVLEGELKNPSQIALPAIGAAGGLIVPAVIFYLFTKHDSFALGGWAIPTATDIAFALGILSLLGPRVPTSLKIFLMTLAIVDDLCAIVIIALFYTSELSAQMLAVASVCLAALFALNRLGVKSKAAYLIVGAVMWVAVLKSGVHATLAGVVAAFFIPISFKDEPGKSMLKSIEHDLHGWVAFGVLPIFAFVNAGISLRGVGLDEILSPVALGTALGLFVGKQVGVFSFSFLAIKFKLAKLPEGSNFIQLYGIAVLCGVGFTMSLFINSLAYNDTDAFAYADKLAILLGSVVSGAAGFILLKFSAKNQSARIKECKIQIETIVEKCEIKE.

The next 11 helical transmembrane spans lie at 13-33 (SGGILLMIATVAALLCQNTFL), 58-78 (LILWVNDGLMAVFFFLIGLEL), 93-113 (IALPAIGAAGGLIVPAVIFYL), 120-140 (FALGGWAIPTATDIAFALGIL), 153-173 (IFLMTLAIVDDLCAIVIIALF), 176-196 (SELSAQMLAVASVCLAALFAL), 216-236 (VAVLKSGVHATLAGVVAAFFI), 256-276 (LHGWVAFGVLPIFAFVNAGIS), 279-299 (GVGLDEILSPVALGTALGLFV), 326-346 (FIQLYGIAVLCGVGFTMSLFI), and 363-383 (LAILLGSVVSGAAGFILLKFS).

It belongs to the NhaA Na(+)/H(+) (TC 2.A.33) antiporter family.

The protein resides in the cell inner membrane. The enzyme catalyses Na(+)(in) + 2 H(+)(out) = Na(+)(out) + 2 H(+)(in). Na(+)/H(+) antiporter that extrudes sodium in exchange for external protons. The sequence is that of Na(+)/H(+) antiporter NhaA from Campylobacter concisus (strain 13826).